We begin with the raw amino-acid sequence, 334 residues long: Nucleoid-associated protein Pfl01_0983 (334 aa).

It belongs to the YejK family.

The protein localises to the cytoplasm. Its subcellular location is the nucleoid. In Pseudomonas fluorescens (strain Pf0-1), this protein is Nucleoid-associated protein Pfl01_0983.